The chain runs to 339 residues: Centromere protein N (339 aa).

Residues serine 226, serine 235, and serine 282 each carry the phosphoserine modification.

The protein belongs to the CENP-N/CHL4 family. In terms of assembly, component of the CENPA-NAC complex, at least composed of CENPA, CENPC, CENPH, CENPM, CENPN, CENPT and CENPU. The CENPA-NAC complex interacts with the CENPA-CAD complex, composed of CENPI, CENPK, CENPL, CENPO, CENPP, CENPQ, CENPR and CENPS. Interacts directly with CENPA. Identified in a centromere complex containing histones H2A, H2B and H4, and at least CENPA, CENPB, CENPC, CENPT, CENPN, HJURP, SUPT16H, SSRP1 and RSF1.

It localises to the nucleus. The protein localises to the chromosome. Its subcellular location is the centromere. The protein resides in the kinetochore. Functionally, component of the CENPA-NAC (nucleosome-associated) complex, a complex that plays a central role in assembly of kinetochore proteins, mitotic progression and chromosome segregation. The CENPA-NAC complex recruits the CENPA-CAD (nucleosome distal) complex and may be involved in incorporation of newly synthesized CENPA into centromeres. CENPN is the first protein to bind specifically to CENPA nucleosomes and the direct binding of CENPA nucleosomes by CENPN is required for centromere assembly. Required for chromosome congression and efficiently align the chromosomes on a metaphase plate. This is Centromere protein N (CENPN) from Homo sapiens (Human).